The sequence spans 343 residues: Holliday junction branch migration complex subunit RuvB (343 aa).

The interval 1-182 (MTDPIPLHTP…FGIPVRLNFY (182 aa)) is large ATPase domain (RuvB-L). ATP-binding residues include leucine 21, arginine 22, glycine 63, lysine 66, threonine 67, threonine 68, arginine 172, tyrosine 182, and arginine 219. Threonine 67 provides a ligand contact to Mg(2+). A small ATPAse domain (RuvB-S) region spans residues 183–253 (TEEELEKVVT…IADAALTRLE (71 aa)). The interval 256 to 343 (GLGLDAMDRR…SQTGLFDGKS (88 aa)) is head domain (RuvB-H). The DNA site is built by arginine 292, arginine 311, and arginine 316.

The protein belongs to the RuvB family. As to quaternary structure, homohexamer. Forms an RuvA(8)-RuvB(12)-Holliday junction (HJ) complex. HJ DNA is sandwiched between 2 RuvA tetramers; dsDNA enters through RuvA and exits via RuvB. An RuvB hexamer assembles on each DNA strand where it exits the tetramer. Each RuvB hexamer is contacted by two RuvA subunits (via domain III) on 2 adjacent RuvB subunits; this complex drives branch migration. In the full resolvosome a probable DNA-RuvA(4)-RuvB(12)-RuvC(2) complex forms which resolves the HJ.

The protein localises to the cytoplasm. It carries out the reaction ATP + H2O = ADP + phosphate + H(+). In terms of biological role, the RuvA-RuvB-RuvC complex processes Holliday junction (HJ) DNA during genetic recombination and DNA repair, while the RuvA-RuvB complex plays an important role in the rescue of blocked DNA replication forks via replication fork reversal (RFR). RuvA specifically binds to HJ cruciform DNA, conferring on it an open structure. The RuvB hexamer acts as an ATP-dependent pump, pulling dsDNA into and through the RuvAB complex. RuvB forms 2 homohexamers on either side of HJ DNA bound by 1 or 2 RuvA tetramers; 4 subunits per hexamer contact DNA at a time. Coordinated motions by a converter formed by DNA-disengaged RuvB subunits stimulates ATP hydrolysis and nucleotide exchange. Immobilization of the converter enables RuvB to convert the ATP-contained energy into a lever motion, pulling 2 nucleotides of DNA out of the RuvA tetramer per ATP hydrolyzed, thus driving DNA branch migration. The RuvB motors rotate together with the DNA substrate, which together with the progressing nucleotide cycle form the mechanistic basis for DNA recombination by continuous HJ branch migration. Branch migration allows RuvC to scan DNA until it finds its consensus sequence, where it cleaves and resolves cruciform DNA. This is Holliday junction branch migration complex subunit RuvB from Erythrobacter litoralis (strain HTCC2594).